A 919-amino-acid polypeptide reads, in one-letter code: Probable disease resistance protein At4g27220 (919 aa).

2 coiled-coil regions span residues 1–30 and 74–95; these read MFRS…LKRS and VEIL…KKIS. Residues 121–399 enclose the NB-ARC domain; it reads MLDKLKDCLK…AEGLLDGQHH (279 aa). 141 to 148 is a binding site for ATP; it reads GMGGVGKT. 8 LRR repeats span residues 447–468, 469–492, 494–516, 519–540, 542–564, 565–587, 588–610, and 611–635; these read GEGF…QDKF, VSSV…VIEG, ETLV…FLQA, NLRI…FSNL, SLRS…ESLV, KLQF…EALS, SLRY…TILQ, and LSSL…EREG.

Belongs to the disease resistance NB-LRR family.

Functionally, probable disease resistance protein. This chain is Probable disease resistance protein At4g27220, found in Arabidopsis thaliana (Mouse-ear cress).